A 128-amino-acid chain; its full sequence is Z-ring associated protein G (128 aa).

The chain crosses the membrane as a helical span at residues 7 to 27 (EIWFSISIAFLIGTLCGVLVM). Residues 37-75 (QIQLKSELASAEAKIEEQKQQLERHFEQSANLLENLAED) are a coiled coil. The disordered stretch occupies residues 105-128 (NHANGDEDNQPRDYSDGSSGLLKS). The span at 107 to 119 (ANGDEDNQPRDYS) shows a compositional bias: basic and acidic residues.

It belongs to the ZapG family. In terms of assembly, homotetramer. In solution, is primarily monomeric but forms small amounts of stable tetramer and hexadecamer. The crystal structure of the cytosolic region shows a coiled-coil tetramer in the asymmetric unit that is very likely to be a physiologically relevant assembly of the protein.

It is found in the cell inner membrane. Functionally, involved in cell division, cell envelope biogenesis and cell shape maintenance. The protein is Z-ring associated protein G of Haemophilus ducreyi (strain 35000HP / ATCC 700724).